The primary structure comprises 161 residues: 2-C-methyl-D-erythritol 2,4-cyclodiphosphate synthase (161 aa).

Aspartate 11 and histidine 13 together coordinate a divalent metal cation. 4-CDP-2-C-methyl-D-erythritol 2-phosphate-binding positions include 11 to 13 (DIH) and 37 to 38 (HS). Residue histidine 45 participates in a divalent metal cation binding. 4-CDP-2-C-methyl-D-erythritol 2-phosphate is bound by residues 59-61 (DIG), 135-138 (TTNE), and arginine 145.

The protein belongs to the IspF family. As to quaternary structure, homotrimer. Requires a divalent metal cation as cofactor.

The enzyme catalyses 4-CDP-2-C-methyl-D-erythritol 2-phosphate = 2-C-methyl-D-erythritol 2,4-cyclic diphosphate + CMP. It participates in isoprenoid biosynthesis; isopentenyl diphosphate biosynthesis via DXP pathway; isopentenyl diphosphate from 1-deoxy-D-xylulose 5-phosphate: step 4/6. In terms of biological role, involved in the biosynthesis of isopentenyl diphosphate (IPP) and dimethylallyl diphosphate (DMAPP), two major building blocks of isoprenoid compounds. Catalyzes the conversion of 4-diphosphocytidyl-2-C-methyl-D-erythritol 2-phosphate (CDP-ME2P) to 2-C-methyl-D-erythritol 2,4-cyclodiphosphate (ME-CPP) with a corresponding release of cytidine 5-monophosphate (CMP). This Thermosynechococcus vestitus (strain NIES-2133 / IAM M-273 / BP-1) protein is 2-C-methyl-D-erythritol 2,4-cyclodiphosphate synthase.